The sequence spans 919 residues: Alanine--tRNA ligase (919 aa).

Zn(2+) is bound by residues H565, H569, C667, and H671.

This sequence belongs to the class-II aminoacyl-tRNA synthetase family. It depends on Zn(2+) as a cofactor.

It localises to the cytoplasm. It carries out the reaction tRNA(Ala) + L-alanine + ATP = L-alanyl-tRNA(Ala) + AMP + diphosphate. In terms of biological role, catalyzes the attachment of alanine to tRNA(Ala) in a two-step reaction: alanine is first activated by ATP to form Ala-AMP and then transferred to the acceptor end of tRNA(Ala). Also edits incorrectly charged Ser-tRNA(Ala) and Gly-tRNA(Ala) via its editing domain. The sequence is that of Alanine--tRNA ligase from Leptospira biflexa serovar Patoc (strain Patoc 1 / Ames).